Here is a 124-residue protein sequence, read N- to C-terminus: MGMSSLTRAELGALGEEVAVEHLAALGLKTLARNWRCRYGELDIIAEDAATGTVVFVEVKTRSGDGFGGLAEAVTPQKVRRIRRLAAIWLAAQDAHWAVLRIDVIGVRVGRSRDPEIVHLAGVG.

This sequence belongs to the UPF0102 family.

The protein is UPF0102 protein MSMEG_2508/MSMEI_2448 of Mycolicibacterium smegmatis (strain ATCC 700084 / mc(2)155) (Mycobacterium smegmatis).